The chain runs to 458 residues: MEQLTPRETVRELDRYIVGQNQAKRAVAIALRNRYRRSLLPEGMQEEVLPKNILMIGPTGVGKTEIARRLAKLVRAPFLKVEATKFTEVGYVGRDVESIVRDLVEISLRMVKAEKMEEVEIQAAQAAEKRLEALLVPGKRQENNSSNPFQFLFNQGQEKEETVTPEIERDRTFIRERLHRGELDEQVIEVEVEDNQPLLPDFLGTGMEINTNLQDMMAGMLPKKRHKRKVTVREARRILTTEEAQKLIDHDEAVQEAIRRVEQEGMVFLDEIDKIAGRDGASGPDVSRGGVQRDILPIVEGSTINTKYGPVKTDHILFIAAGAFHVAKPSDLIPELQGRFPIRVELESLSIEDFQRILTEPQSSLIKQYSALLETEGIKVEFTENAIDELAKVAYEVNSNTENIGARRLHTIVERVLEELSFEASELPEDYTVTINREYIQHRLGNIVRNQDLSRYIL.

ATP is bound by residues valine 18, glycine 60–glutamate 65, aspartate 270, glutamate 335, and arginine 407.

It belongs to the ClpX chaperone family. HslU subfamily. A double ring-shaped homohexamer of HslV is capped on each side by a ring-shaped HslU homohexamer. The assembly of the HslU/HslV complex is dependent on binding of ATP.

Its subcellular location is the cytoplasm. ATPase subunit of a proteasome-like degradation complex; this subunit has chaperone activity. The binding of ATP and its subsequent hydrolysis by HslU are essential for unfolding of protein substrates subsequently hydrolyzed by HslV. HslU recognizes the N-terminal part of its protein substrates and unfolds these before they are guided to HslV for hydrolysis. The polypeptide is ATP-dependent protease ATPase subunit HslU (Desulfitobacterium hafniense (strain DSM 10664 / DCB-2)).